The chain runs to 814 residues: Acyl-coenzyme A dehydrogenase (814 aa).

The active-site Proton acceptor is the Glu497.

The protein belongs to the acyl-CoA dehydrogenase family. Requires FAD as cofactor.

It catalyses the reaction a medium-chain 2,3-saturated fatty acyl-CoA + oxidized [electron-transfer flavoprotein] + H(+) = a medium-chain (2E)-enoyl-CoA + reduced [electron-transfer flavoprotein]. It carries out the reaction a long-chain 2,3-saturated fatty acyl-CoA + oxidized [electron-transfer flavoprotein] + H(+) = a long-chain (2E)-enoyl-CoA + reduced [electron-transfer flavoprotein]. It functions in the pathway lipid metabolism; fatty acid beta-oxidation. Functionally, catalyzes the dehydrogenation of acyl-coenzymes A (acyl-CoAs) to 2-enoyl-CoAs, the first step of the beta-oxidation cycle of fatty acid degradation. Is required for the utilization of medium- and long-chain fatty acids as sole carbon sources for growth. Is needed for bacterial survival during carbone-source starvation. This is Acyl-coenzyme A dehydrogenase (fadE) from Salmonella typhi.